Reading from the N-terminus, the 394-residue chain is Methionine import ATP-binding protein MetN 2 (394 aa).

Residues 39 to 278 (VSLEQVGKVF…PRHGATRALL (240 aa)) form the ABC transporter domain. Residue 75–82 (GRSGAGKS) coordinates ATP.

It belongs to the ABC transporter superfamily. Methionine importer (TC 3.A.1.24) family. In terms of assembly, the complex is composed of two ATP-binding proteins (MetN), two transmembrane proteins (MetI) and a solute-binding protein (MetQ).

Its subcellular location is the cell inner membrane. It catalyses the reaction L-methionine(out) + ATP + H2O = L-methionine(in) + ADP + phosphate + H(+). The catalysed reaction is D-methionine(out) + ATP + H2O = D-methionine(in) + ADP + phosphate + H(+). Its function is as follows. Part of the ABC transporter complex MetNIQ involved in methionine import. Responsible for energy coupling to the transport system. The chain is Methionine import ATP-binding protein MetN 2 from Burkholderia cenocepacia (strain HI2424).